The sequence spans 200 residues: Probable GTP-binding protein EngB (200 aa).

The region spanning 24 to 199 (EGAEVAFAGR…RGVIGGWLGL (176 aa)) is the EngB-type G domain. GTP is bound by residues 32–39 (GRSNAGKS), 59–63 (GRTQQ), 77–80 (DLPG), 144–147 (TKAD), and 178–180 (FSG). The Mg(2+) site is built by Ser-39 and Thr-61.

This sequence belongs to the TRAFAC class TrmE-Era-EngA-EngB-Septin-like GTPase superfamily. EngB GTPase family. Mg(2+) is required as a cofactor.

Functionally, necessary for normal cell division and for the maintenance of normal septation. This chain is Probable GTP-binding protein EngB, found in Stenotrophomonas maltophilia (strain K279a).